The chain runs to 323 residues: Calcium homeostasis modulator protein 2 (323 aa).

Residues 1–21 lie on the Cytoplasmic side of the membrane; it reads MAALIAENFRFLSLFFKSKDV. The tract at residues 14-39 is central pore; it reads LFFKSKDVMIFNGLVALGTVGSQELF. The helical transmembrane segment at 22–43 threads the bilayer; that stretch reads MIFNGLVALGTVGSQELFSVVA. Over 44–52 the chain is Extracellular; that stretch reads FHCPCSPAR. 2 cysteine pairs are disulfide-bonded: Cys-46–Cys-130 and Cys-48–Cys-162. Residues 53–76 traverse the membrane as a helical segment; that stretch reads NYLYGLTAIGVPALALFLIGVILN. At 77 to 101 the chain is on the cytoplasmic side; it reads NHTWNLVAECQYRRAKNCSAAPTFL. The chain crosses the membrane as a helical span at residues 102 to 132; it reads LLSSILGRAAVAPVTWSVISLLRGEAYVCAL. The Extracellular portion of the chain corresponds to 133–179; that stretch reads SEFVDPSSLTAGDEGFPPDHATEILARFPCGEGPANLSGFREEVSRR. Residues 145–152 are hemichannel docking; it reads DEGFPPDH. A helical membrane pass occupies residues 180–206; sequence LKYESQLFGWLLIGVVAILVFLTKCFK. The Cytoplasmic segment spans residues 207–323; the sequence is HYCSPLSYRQ…DNVEMALLTV (117 aa). The tract at residues 214–251 is intersubunit interaction; that stretch reads YRQEAYWAQYRTNEDQLFQRTAEVHSRVLAANNVRRFF.

The protein belongs to the CALHM family. In terms of assembly, homo-undecamer. Two undecameric hemichannels can assemble in a head-to-head manner to form a gap junction.

It is found in the cell membrane. It carries out the reaction ATP(in) = ATP(out). In terms of biological role, pore-forming subunit of Ca(2+) homeostasis modulator channels. Mediates ATP release from astrocytes and ATP-induced Ca(2+) influx in microglia thus regulating neuronal ATP and Ca(2+) homeostasis, synaptic transmission and neuroinflammatory response. May form intercellular gap junctions. The gating mechanism remains unknown. The protein is Calcium homeostasis modulator protein 2 (Calhm2) of Rattus norvegicus (Rat).